The chain runs to 497 residues: Paired box protein Pax-2-A (497 aa).

Positions 16-142 (GHGGVNQLGG…SSINRIIRTK (127 aa)) form a DNA-binding region, paired. Residues 19-75 (GVNQLGGVFVNGRPLPDVVRQRIVELAHQGVRPCDISRQLRVSHGCVSKILGRYYET) are PAI subdomain. Residues 94–142 (KVVDKIAEYKRQNPTMFAWEIRDRLLAEGICDNDTVPSVSSINRIIRTK) are RED subdomain. The segment at 143–224 (VQQPFHPTPD…GDSQSSVESL (82 aa)) is disordered. The span at 166 to 178 (VPSTASPPVSSAS) shows a compositional bias: low complexity.

Expression becomes spatially localized at mid-gastrula stages and is confined to the nervous system (midbrain, hindbrain, spinal cord), sensory organs (optic vesicle and stalk, otic vesicle), visceral arches, developing excretory system (pronephros, pronephric duct, rectal diverticulum, proctodaeum) and thyroid gland. Splicing does not appear to be tissue-specific and tissues displayed the same spectrum of splice variants.

It is found in the nucleus. Functionally, probable transcription factor. Involved in kidney development, acting synergistically with lhx1/lim-1 in pronephric morphogenesis during the tailbud stages. This chain is Paired box protein Pax-2-A (pax2-a), found in Xenopus laevis (African clawed frog).